A 786-amino-acid polypeptide reads, in one-letter code: Exo-beta-D-glucosaminidase (786 aa).

Residues Y53, 102–103, 178–179, E306, E347, and Y379 contribute to the substrate site; these read GE and DE. The active-site Proton donor is the E179. The active-site Nucleophile is E347.

It belongs to the glycosyl hydrolase 35 family. As to quaternary structure, homodimer.

The protein localises to the cytoplasm. It catalyses the reaction beta-D-glucosaminyl-(1-&gt;4)-N-acetyl-D-glucosamine + H2O = D-glucosamine + N-acetyl-D-glucosamine. It functions in the pathway glycan degradation; chitin degradation. Functionally, exo-type enzyme that specifically cleaves the non-reducing terminal glycosidic bond of chitooligosaccharides. Catalyzes the hydrolysis of GlcN-GlcNAc to glucosamine (GlcN) and N-acetylglucosamine (GlcNAc). Involved in chitin degradation. Can also hydrolyze reduced chitobiose (GlcN2OH) and chitooligosaccharides of various chain lengths. In Thermococcus kodakarensis (strain ATCC BAA-918 / JCM 12380 / KOD1) (Pyrococcus kodakaraensis (strain KOD1)), this protein is Exo-beta-D-glucosaminidase.